A 382-amino-acid polypeptide reads, in one-letter code: Apolipoprotein A-IV (382 aa).

The signal sequence occupies residues 1 to 20; it reads MFLKAVVLTLSLVAVTGAQA. A run of 13 repeats spans residues 33–54, 60–81, 82–103, 115–136, 137–158, 159–180, 181–202, 203–224, 225–246, 247–268, 269–286, 287–308, and 309–330. The segment at 33–330 is 13 X 22 AA approximate tandem repeats; it reads DYFSQLSNNA…QVEELRQKLG (298 aa).

The protein belongs to the apolipoprotein A1/A4/E family. In terms of assembly, homodimer. Phosphorylation sites are present in the extracellular medium.

It localises to the secreted. In terms of biological role, may have a role in chylomicrons and VLDL secretion and catabolism. Required for efficient activation of lipoprotein lipase by ApoC-II; potent activator of LCAT. Apoa-IV is a major component of HDL and chylomicrons. The polypeptide is Apolipoprotein A-IV (APOA4) (Neomonachus schauinslandi (Hawaiian monk seal)).